Consider the following 294-residue polypeptide: Bifunctional protein FolD (294 aa).

NADP(+)-binding positions include 166–168 (GRS), Ser-191, and Ile-232.

Belongs to the tetrahydrofolate dehydrogenase/cyclohydrolase family. In terms of assembly, homodimer.

It catalyses the reaction (6R)-5,10-methylene-5,6,7,8-tetrahydrofolate + NADP(+) = (6R)-5,10-methenyltetrahydrofolate + NADPH. The catalysed reaction is (6R)-5,10-methenyltetrahydrofolate + H2O = (6R)-10-formyltetrahydrofolate + H(+). Its pathway is one-carbon metabolism; tetrahydrofolate interconversion. Its function is as follows. Catalyzes the oxidation of 5,10-methylenetetrahydrofolate to 5,10-methenyltetrahydrofolate and then the hydrolysis of 5,10-methenyltetrahydrofolate to 10-formyltetrahydrofolate. The polypeptide is Bifunctional protein FolD (Bradyrhizobium sp. (strain BTAi1 / ATCC BAA-1182)).